We begin with the raw amino-acid sequence, 58 residues long: uncharacterized protein (58 aa).

Residues 23–51 (TTTSTSTTTTSTTTSTTTSTTTTTTTTTT) are compositionally biased toward low complexity. A disordered region spans residues 23-58 (TTTSTSTTTTSTTTSTTTSTTTTTTTTTTKDFNTET).

This is an uncharacterized protein from Dictyostelium discoideum (Social amoeba).